A 426-amino-acid chain; its full sequence is DUF724 domain-containing protein 9 (426 aa).

Polar residues-rich tracts occupy residues 164–184 (ESSL…NANE) and 213–222 (PRNQNASVND). Residues 164 to 248 (ESSLTQGSGD…REESLCSDAS (85 aa)) are disordered. Over residues 223–242 (STRENENSEDINRKRKREES) the composition is skewed to basic and acidic residues. A DUF724 domain is found at 256 to 425 (LPFEKKLSIW…LQFQTTASAP (170 aa)). Residues 370–402 (AEKESIKIENERKILELQRLNEEVDKEIAQSKS) are a coiled coil.

As to expression, expressed in flowers.

It is found in the nucleus. In terms of biological role, may be involved in the polar growth of plant cells via transportation of RNAs. The polypeptide is DUF724 domain-containing protein 9 (Arabidopsis thaliana (Mouse-ear cress)).